Reading from the N-terminus, the 336-residue chain is tRNA N6-adenosine threonylcarbamoyltransferase (336 aa).

Positions 114 and 118 each coordinate Fe cation. Residues 136 to 140, Asp169, Gly182, Asp186, and Asn275 contribute to the substrate site; that span reads LVSGG. Asp301 is a binding site for Fe cation.

Belongs to the KAE1 / TsaD family. Fe(2+) is required as a cofactor.

It localises to the cytoplasm. It catalyses the reaction L-threonylcarbamoyladenylate + adenosine(37) in tRNA = N(6)-L-threonylcarbamoyladenosine(37) in tRNA + AMP + H(+). Functionally, required for the formation of a threonylcarbamoyl group on adenosine at position 37 (t(6)A37) in tRNAs that read codons beginning with adenine. Is involved in the transfer of the threonylcarbamoyl moiety of threonylcarbamoyl-AMP (TC-AMP) to the N6 group of A37, together with TsaE and TsaB. TsaD likely plays a direct catalytic role in this reaction. The polypeptide is tRNA N6-adenosine threonylcarbamoyltransferase (Streptococcus pneumoniae serotype 4 (strain ATCC BAA-334 / TIGR4)).